The chain runs to 33 residues: rho operon leader peptide (33 aa).

Residues 1-25 show a composition bias toward polar residues; it reads MRSEQISGSSLNPSCRFSSAYSPVT. The tract at residues 1–33 is disordered; that stretch reads MRSEQISGSSLNPSCRFSSAYSPVTRQRKDMSR.

The sequence is that of rho operon leader peptide (rhoL) from Escherichia coli O157:H7.